The primary structure comprises 265 residues: L-histidine 2-aminobutanoyltransferase (265 aa).

Belongs to the methyltransferase superfamily. CntL family.

It carries out the reaction L-histidine + S-adenosyl-L-methionine = (2S)-2-amino-4-{[(1S)-1-carboxy-2-(1H-imidazol-4-yl)ethyl]amino}butanoate + S-methyl-5'-thioadenosine + H(+). In terms of biological role, catalyzes the nucleophilic attack of one alpha-aminobutanoate moiety from SAM onto L-histidine to produce the intermediate (2S)-2-amino-4-{[(1S)-1-carboxy-2-(1H-imidazol-4-yl)ethyl]amino}butanoate. Functions in the biosynthesis of the metallophore yersinopine, which is involved in metal acquisition and thus enables bacterial growth inside the host, where metal access is limited. Therefore, this enzyme probably contributes to Yersinia virulence. The protein is L-histidine 2-aminobutanoyltransferase of Yersinia pestis.